Consider the following 734-residue polypeptide: Photosystem I P700 chlorophyll a apoprotein A2 (734 aa).

The next 8 helical transmembrane spans lie at 46–69, 135–158, 175–199, 273–291, 330–353, 369–395, 417–439, and 517–535; these read IFAS…FHVA, LYTG…LHLQ, LNHH…HVAI, MAHH…GHMY, IHFQ…QHMY, AALY…IFFI, AIIS…LYVH, and FLVH…LILV. [4Fe-4S] cluster contacts are provided by cysteine 559 and cysteine 568. 2 consecutive transmembrane segments (helical) span residues 575–596 and 643–665; these read AFYL…YWHW and LSVW…MFLI. The chlorophyll a site is built by histidine 654, methionine 662, and tyrosine 670. Phylloquinone is bound at residue tryptophan 671. Residues 707-727 form a helical membrane-spanning segment; it reads LVGLAHFSVGYIFTYAAFLIA.

The protein belongs to the PsaA/PsaB family. In terms of assembly, the PsaA/B heterodimer binds the P700 chlorophyll special pair and subsequent electron acceptors. PSI consists of a core antenna complex that captures photons, and an electron transfer chain that converts photonic excitation into a charge separation. The eukaryotic PSI reaction center is composed of at least 11 subunits. P700 is a chlorophyll a/chlorophyll a' dimer, A0 is one or more chlorophyll a, A1 is one or both phylloquinones and FX is a shared 4Fe-4S iron-sulfur center. serves as cofactor.

It is found in the plastid. The protein localises to the chloroplast thylakoid membrane. The catalysed reaction is reduced [plastocyanin] + hnu + oxidized [2Fe-2S]-[ferredoxin] = oxidized [plastocyanin] + reduced [2Fe-2S]-[ferredoxin]. PsaA and PsaB bind P700, the primary electron donor of photosystem I (PSI), as well as the electron acceptors A0, A1 and FX. PSI is a plastocyanin-ferredoxin oxidoreductase, converting photonic excitation into a charge separation, which transfers an electron from the donor P700 chlorophyll pair to the spectroscopically characterized acceptors A0, A1, FX, FA and FB in turn. Oxidized P700 is reduced on the lumenal side of the thylakoid membrane by plastocyanin. This Draba nemorosa (Woodland whitlowgrass) protein is Photosystem I P700 chlorophyll a apoprotein A2.